Consider the following 205-residue polypeptide: Ribonuclease HII (205 aa).

The 203-residue stretch at 1 to 203 (MKAGIDEAGK…VSNLRQKTLD (203 aa)) folds into the RNase H type-2 domain. Asp6 and Glu7 together coordinate a divalent metal cation. Arg46 is a substrate binding site. Asp101 serves as a coordination point for a divalent metal cation. Substrate-binding residues include Lys143, Arg146, and Tyr164.

The protein belongs to the RNase HII family. The cofactor is Mn(2+). Mg(2+) serves as cofactor.

The protein localises to the cytoplasm. The enzyme catalyses Endonucleolytic cleavage to 5'-phosphomonoester.. Its function is as follows. Endonuclease that specifically degrades the RNA of RNA-DNA hybrids. In Archaeoglobus fulgidus (strain ATCC 49558 / DSM 4304 / JCM 9628 / NBRC 100126 / VC-16), this protein is Ribonuclease HII (rnhB).